Consider the following 173-residue polypeptide: Shikimate kinase (173 aa).

Position 14-19 (14-19 (GAGKST)) interacts with ATP. Ser-18 is a binding site for Mg(2+). Residues Asp-36, Arg-60, and Gly-82 each contribute to the substrate site. Position 120 (Lys-120) interacts with ATP. A substrate-binding site is contributed by Arg-140.

Belongs to the shikimate kinase family. Monomer. Mg(2+) serves as cofactor.

It is found in the cytoplasm. The enzyme catalyses shikimate + ATP = 3-phosphoshikimate + ADP + H(+). Its pathway is metabolic intermediate biosynthesis; chorismate biosynthesis; chorismate from D-erythrose 4-phosphate and phosphoenolpyruvate: step 5/7. Catalyzes the specific phosphorylation of the 3-hydroxyl group of shikimic acid using ATP as a cosubstrate. This chain is Shikimate kinase (aroK), found in Wigglesworthia glossinidia brevipalpis.